We begin with the raw amino-acid sequence, 826 residues long: Hyaluronate lyase HylA (826 aa).

Residues 1–36 (MFDIPYQVPSRRTFLSLSALSAIAIAASPEMPDAFA) constitute a signal peptide (tat-type signal). Catalysis depends on residues His276, Tyr285, and Arg339. The tract at residues 800–826 (LSPALPKPTKPSLRASSYPLGLPHTSS) is disordered.

This sequence belongs to the polysaccharide lyase 8 family. Predicted to be exported by the Tat system. The position of the signal peptide cleavage has not been experimentally proven.

It is found in the secreted. The enzyme catalyses [hyaluronan](n) = n 3-(4-deoxy-beta-D-gluc-4-enuronosyl)-N-acetyl-D-glucosamine + H2O. Degrades hyaluronic acid (HA) into large-sized HA oligosaccharides, including tetrasaccharide HA (HA-4), hexasaccharide HA (HA-6) and higher molecular weight HA, and to a lesser extent into HA disaccharides (HA-2). Involved in the pathogenesis of acne. HA degradation products induce secretion of proinflammatory cytokines (IL-6, IL-8 and TNF-alpha) from human HaCaT keratinocyte cell line and from mouse bone marrow derived macrophages (BMDMs). Produced HA fragments also direct robust TLR2-dependent inflammation in the mouse model of acne. The chain is Hyaluronate lyase HylA from Cutibacterium acnes (Propionibacterium acnes).